The primary structure comprises 702 residues: Polyribonucleotide nucleotidyltransferase (702 aa).

Positions 485 and 491 each coordinate Mg(2+). Residues 552–611 (PKTSTLQIDPEKIRDVIGAGGKVINKIIADTGVKIDIKEDGLVYVSSAESEGVKEAVKII) enclose the KH domain. The S1 motif domain maps to 621-689 (GEIYLGKVTK…SQGRINLSRK (69 aa)).

Belongs to the polyribonucleotide nucleotidyltransferase family. Mg(2+) serves as cofactor.

Its subcellular location is the cytoplasm. It carries out the reaction RNA(n+1) + phosphate = RNA(n) + a ribonucleoside 5'-diphosphate. Functionally, involved in mRNA degradation. Catalyzes the phosphorolysis of single-stranded polyribonucleotides processively in the 3'- to 5'-direction. The protein is Polyribonucleotide nucleotidyltransferase of Clostridium perfringens (strain ATCC 13124 / DSM 756 / JCM 1290 / NCIMB 6125 / NCTC 8237 / Type A).